A 248-amino-acid polypeptide reads, in one-letter code: uncharacterized protein (248 aa).

E8–L32 provides a ligand contact to NADP(+). Residue S134 participates in substrate binding. Y147 serves as the catalytic Proton acceptor.

It belongs to the short-chain dehydrogenases/reductases (SDR) family.

This is an uncharacterized protein from Sinorhizobium fredii (strain NBRC 101917 / NGR234).